We begin with the raw amino-acid sequence, 266 residues long: Glucosamine-6-phosphate deaminase (266 aa).

Aspartate 72 acts as the Proton acceptor; for enolization step in catalysis. The active-site For ring-opening step is the aspartate 141. The active-site Proton acceptor; for ring-opening step is histidine 143. The For ring-opening step role is filled by glutamate 148.

It belongs to the glucosamine/galactosamine-6-phosphate isomerase family. NagB subfamily. Homohexamer.

The enzyme catalyses alpha-D-glucosamine 6-phosphate + H2O = beta-D-fructose 6-phosphate + NH4(+). It participates in amino-sugar metabolism; N-acetylneuraminate degradation; D-fructose 6-phosphate from N-acetylneuraminate: step 5/5. Allosterically activated by N-acetylglucosamine 6-phosphate (GlcNAc6P). Catalyzes the reversible isomerization-deamination of glucosamine 6-phosphate (GlcN6P) to form fructose 6-phosphate (Fru6P) and ammonium ion. The polypeptide is Glucosamine-6-phosphate deaminase (Aeromonas hydrophila subsp. hydrophila (strain ATCC 7966 / DSM 30187 / BCRC 13018 / CCUG 14551 / JCM 1027 / KCTC 2358 / NCIMB 9240 / NCTC 8049)).